The primary structure comprises 255 residues: ATP synthase subunit a 2 (255 aa).

The next 5 membrane-spanning stretches (helical) occupy residues 24–44, 86–106, 131–151, 205–225, and 226–246; these read WFGINLDSMIMVWLTGLVFIL, LIGPLALTIFVWVLLMNAVDL, DINITMSMALGVFILVLGYTF, MIFILIALMPWWMQWALSVPW, and ALFHILIVVLQAFIFMVLTVV.

The protein belongs to the ATPase A chain family. As to quaternary structure, F-type ATPases have 2 components, CF(1) - the catalytic core - and CF(0) - the membrane proton channel. CF(1) has five subunits: alpha(3), beta(3), gamma(1), delta(1), epsilon(1). CF(0) has three main subunits: a(1), b(2) and c(9-12). The alpha and beta chains form an alternating ring which encloses part of the gamma chain. CF(1) is attached to CF(0) by a central stalk formed by the gamma and epsilon chains, while a peripheral stalk is formed by the delta and b chains.

It localises to the cell inner membrane. Functionally, key component of the proton channel; it plays a direct role in the translocation of protons across the membrane. This is ATP synthase subunit a 2 from Vibrio campbellii (strain ATCC BAA-1116).